Here is a 369-residue protein sequence, read N- to C-terminus: Glutamate 5-kinase (369 aa).

K9 contributes to the ATP binding site. Substrate is bound by residues S49, D136, and N148. Residues 168–169 (TD) and 210–216 (TGGMLTK) contribute to the ATP site. Residues 275 to 355 (QGEIYVDQGA…KGVVIHRDDW (81 aa)) form the PUA domain.

This sequence belongs to the glutamate 5-kinase family.

Its subcellular location is the cytoplasm. It catalyses the reaction L-glutamate + ATP = L-glutamyl 5-phosphate + ADP. Its pathway is amino-acid biosynthesis; L-proline biosynthesis; L-glutamate 5-semialdehyde from L-glutamate: step 1/2. Its function is as follows. Catalyzes the transfer of a phosphate group to glutamate to form L-glutamate 5-phosphate. This is Glutamate 5-kinase from Streptococcus sanguinis (strain SK36).